The sequence spans 355 residues: Probable dual-specificity RNA methyltransferase RlmN (355 aa).

E89 functions as the Proton acceptor in the catalytic mechanism. Residues 95-322 (YENRKTVCLS…KRLGVPTSIR (228 aa)) form the Radical SAM core domain. A disulfide bridge links C102 with C333. [4Fe-4S] cluster contacts are provided by C109, C113, and C116. S-adenosyl-L-methionine-binding positions include 159–160 (GE), S191, 214–216 (SLH), and N290. C333 functions as the S-methylcysteine intermediate in the catalytic mechanism.

The protein belongs to the radical SAM superfamily. RlmN family. [4Fe-4S] cluster serves as cofactor.

Its subcellular location is the cytoplasm. It catalyses the reaction adenosine(2503) in 23S rRNA + 2 reduced [2Fe-2S]-[ferredoxin] + 2 S-adenosyl-L-methionine = 2-methyladenosine(2503) in 23S rRNA + 5'-deoxyadenosine + L-methionine + 2 oxidized [2Fe-2S]-[ferredoxin] + S-adenosyl-L-homocysteine. The catalysed reaction is adenosine(37) in tRNA + 2 reduced [2Fe-2S]-[ferredoxin] + 2 S-adenosyl-L-methionine = 2-methyladenosine(37) in tRNA + 5'-deoxyadenosine + L-methionine + 2 oxidized [2Fe-2S]-[ferredoxin] + S-adenosyl-L-homocysteine. Its function is as follows. Specifically methylates position 2 of adenine 2503 in 23S rRNA and position 2 of adenine 37 in tRNAs. The polypeptide is Probable dual-specificity RNA methyltransferase RlmN (Thermus thermophilus (strain ATCC BAA-163 / DSM 7039 / HB27)).